The sequence spans 558 residues: Cyclomaltodextrinase (558 aa).

Positions 143, 168, and 170 each coordinate Ca(2+). Positions 243 and 323 each coordinate substrate. Catalysis depends on Asp325, which acts as the Nucleophile. Glu354 serves as the catalytic Proton donor. Residues 420-421, Asp465, and Arg469 each bind substrate; that span reads HD.

It belongs to the glycosyl hydrolase 13 family. In terms of assembly, monomer. Depending on the pH of the solution, exists as a monomer, a homodimer or as an assembly of six homodimers forming a dodecamer, which is catalytically the most efficient form of the enzyme. Ca(2+) serves as cofactor.

The catalysed reaction is cyclomaltodextrin + H2O = linear maltodextrin. The enzyme catalyses Hydrolysis of pullulan to panose (6-alpha-D-glucosylmaltose).. Hydrolysis of beta-cyclodextrin is inhibited by Cu(2+), Zn(2+) and Ag(+), and activated by Ca(2+), EGTA and EDTA. Activity is increased over twofold in the presence of 5 mM EDTA. Competitively inhibited by acarbose and methyl 6-amino-6-deoxy-alpha-D-glucopyranoside by reducing the rate of the ring opening step of the reaction. In terms of biological role, hydrolyzes alpha-, beta- and gamma-cyclodextrins and the resulting linear maltodextrins, with the highest activity with beta-cyclodextrin (cyclomaltoheptaose). Soluble starch is hydrolyzed slowly, but it is nevertheless preferred over pullulan as a substrate. Is able to hydrolyze amylose and amylopectin, with a very strong preference for amylose, with maltose and glucose as the main products. Maltose and glucose are the main hydrolysis products of cyclomaltodextrins, maltodextrins and starch, whereas panose is the main hydrolysis product of pullulan. Acarbose is partially hydrolyzed to glucose and pseudotrisaccharide. No activity with maltose as substrate. Has transglycosylating activity with high concentrations of maltotriose, maltotetraose and starch. The protein is Cyclomaltodextrinase of Bacillus sp.